Reading from the N-terminus, the 274-residue chain is Large ribosomal subunit protein uL2 (274 aa).

2 disordered regions span residues Ala28 to Ile54 and Val224 to Lys274. The segment covering Lys263–Lys274 has biased composition (basic and acidic residues).

This sequence belongs to the universal ribosomal protein uL2 family. Part of the 50S ribosomal subunit. Forms a bridge to the 30S subunit in the 70S ribosome.

In terms of biological role, one of the primary rRNA binding proteins. Required for association of the 30S and 50S subunits to form the 70S ribosome, for tRNA binding and peptide bond formation. It has been suggested to have peptidyltransferase activity; this is somewhat controversial. Makes several contacts with the 16S rRNA in the 70S ribosome. The chain is Large ribosomal subunit protein uL2 from Pseudomonas savastanoi pv. phaseolicola (strain 1448A / Race 6) (Pseudomonas syringae pv. phaseolicola (strain 1448A / Race 6)).